The primary structure comprises 462 residues: Bifunctional protein HldE (462 aa).

Residues 1–309 (MKPRILVLGD…EYERSIRKAP (309 aa)) are ribokinase. 186-189 (NKKE) serves as a coordination point for ATP. Residue Asp-254 is part of the active site. The segment at 336–462 (FTNGCFDILH…TAIVERMRSC (127 aa)) is cytidylyltransferase.

This sequence in the N-terminal section; belongs to the carbohydrate kinase PfkB family. The protein in the C-terminal section; belongs to the cytidylyltransferase family. Homodimer.

It carries out the reaction D-glycero-beta-D-manno-heptose 7-phosphate + ATP = D-glycero-beta-D-manno-heptose 1,7-bisphosphate + ADP + H(+). The enzyme catalyses D-glycero-beta-D-manno-heptose 1-phosphate + ATP + H(+) = ADP-D-glycero-beta-D-manno-heptose + diphosphate. The protein operates within nucleotide-sugar biosynthesis; ADP-L-glycero-beta-D-manno-heptose biosynthesis; ADP-L-glycero-beta-D-manno-heptose from D-glycero-beta-D-manno-heptose 7-phosphate: step 1/4. It participates in nucleotide-sugar biosynthesis; ADP-L-glycero-beta-D-manno-heptose biosynthesis; ADP-L-glycero-beta-D-manno-heptose from D-glycero-beta-D-manno-heptose 7-phosphate: step 3/4. Its function is as follows. Catalyzes the phosphorylation of D-glycero-D-manno-heptose 7-phosphate at the C-1 position to selectively form D-glycero-beta-D-manno-heptose-1,7-bisphosphate. In terms of biological role, catalyzes the ADP transfer from ATP to D-glycero-beta-D-manno-heptose 1-phosphate, yielding ADP-D-glycero-beta-D-manno-heptose. This Nitratiruptor sp. (strain SB155-2) protein is Bifunctional protein HldE.